Here is a 165-residue protein sequence, read N- to C-terminus: V-type proton ATPase 16 kDa proteolipid subunit (165 aa).

Residues 1–12 (MSTVFNGDETAP) are Lumenal-facing. Residues 13 to 33 (FFGFLGAAAALVFSCMGAAYG) form a helical membrane-spanning segment. Topologically, residues 34–55 (TAKSGVGVASMGVMRPELVMKS) are cytoplasmic. A helical membrane pass occupies residues 56–76 (IVPVVMAGVLGIYGLIIAVII). At 77–95 (STGINPKAKSYYLFDGYAH) the chain is on the lumenal side. A helical membrane pass occupies residues 96 to 117 (LSSGLACGLAGLSAGMAIGIVG). Residues 118-129 (DAGVRANAQQPK) lie on the Cytoplasmic side of the membrane. A helical transmembrane segment spans residues 130–155 (LFVGMILILIFAEALALYGLIVGIIL). Topologically, residues 156 to 165 (SSRAGQSRAD) are lumenal.

Belongs to the V-ATPase proteolipid subunit family. V-ATPase is a heteromultimeric enzyme composed of a peripheral catalytic V1 complex (main components: subunits A, B, C, D, E, and F) attached to an integral membrane V0 proton pore complex (main component: the proteolipid protein; which is present as a hexamer that forms the proton-conducting pore).

The protein resides in the vacuole membrane. Proton-conducting pore forming subunit of the membrane integral V0 complex of vacuolar ATPase. V-ATPase is responsible for acidifying a variety of intracellular compartments in eukaryotic cells. This chain is V-type proton ATPase 16 kDa proteolipid subunit (VMAC1), found in Mesembryanthemum crystallinum (Common ice plant).